Consider the following 150-residue polypeptide: Probable histone H2A.5 (150 aa).

Residues 1–12 (MESSQATTKPTR) are compositionally biased toward low complexity. Disordered regions lie at residues 1–28 (MESSQATTKPTRGAGGRKGGDRKKSVSK) and 130–150 (KSTASSSQAEKASATKSPKKA). Residues 131-150 (STASSSQAEKASATKSPKKA) are compositionally biased toward polar residues. S146 is subject to Phosphoserine. An SPKK motif motif is present at residues 146–149 (SPKK).

This sequence belongs to the histone H2A family. In terms of assembly, the nucleosome is a histone octamer containing two molecules each of H2A, H2B, H3 and H4 assembled in one H3-H4 heterotetramer and two H2A-H2B heterodimers. The octamer wraps approximately 147 bp of DNA. Not ubiquitinated.

Its subcellular location is the nucleus. The protein localises to the chromosome. Its function is as follows. Core component of nucleosome. Nucleosomes wrap and compact DNA into chromatin, limiting DNA accessibility to the cellular machineries which require DNA as a template. Histones thereby play a central role in transcription regulation, DNA repair, DNA replication and chromosomal stability. DNA accessibility is regulated via a complex set of post-translational modifications of histones, also called histone code, and nucleosome remodeling. This Arabidopsis thaliana (Mouse-ear cress) protein is Probable histone H2A.5.